The chain runs to 136 residues: Glutamate mutase sigma subunit (136 aa).

A B12-binding domain is found at 3–136 (KKKIVIGVIG…IIDLKKDFKI (134 aa)). Adenosylcob(III)alamin is bound by residues 13–17 (SDCHT), histidine 16, and 61–63 (SSI).

It belongs to the methylaspartate mutase GlmS subunit family. As to quaternary structure, heterotetramer composed of 2 epsilon subunits (GlmE) and 2 sigma subunits (GlmS). GlmE exists as a homodimer and GlmS as a monomer. Adenosylcob(III)alamin is required as a cofactor.

The enzyme catalyses (2S,3S)-3-methyl-L-aspartate = L-glutamate. The protein operates within amino-acid degradation; L-glutamate degradation via mesaconate pathway; acetate and pyruvate from L-glutamate: step 1/4. In terms of biological role, catalyzes the carbon skeleton rearrangement of L-glutamate to L-threo-3-methylaspartate ((2S,3S)-3-methylaspartate). This is Glutamate mutase sigma subunit from Fusobacterium nucleatum subsp. nucleatum (strain ATCC 25586 / DSM 15643 / BCRC 10681 / CIP 101130 / JCM 8532 / KCTC 2640 / LMG 13131 / VPI 4355).